Here is a 307-residue protein sequence, read N- to C-terminus: Phosphoribosylaminoimidazole-succinocarboxamide synthase (307 aa).

Belongs to the SAICAR synthetase family.

It carries out the reaction 5-amino-1-(5-phospho-D-ribosyl)imidazole-4-carboxylate + L-aspartate + ATP = (2S)-2-[5-amino-1-(5-phospho-beta-D-ribosyl)imidazole-4-carboxamido]succinate + ADP + phosphate + 2 H(+). It functions in the pathway purine metabolism; IMP biosynthesis via de novo pathway; 5-amino-1-(5-phospho-D-ribosyl)imidazole-4-carboxamide from 5-amino-1-(5-phospho-D-ribosyl)imidazole-4-carboxylate: step 1/2. The sequence is that of Phosphoribosylaminoimidazole-succinocarboxamide synthase from Thermobifida fusca (strain YX).